The primary structure comprises 199 residues: DnaJ homolog subfamily C member 5B (199 aa).

Residue Ser14 is modified to Phosphoserine. The J domain maps to Ala19–Gly84.

As to quaternary structure, interacts with the chaperone complex consisting of HSC70 and SGTA. In terms of processing, palmitoylated. Palmitoylation is not required for membrane association. In terms of tissue distribution, testis specific.

Its subcellular location is the membrane. This chain is DnaJ homolog subfamily C member 5B (DNAJC5B), found in Homo sapiens (Human).